We begin with the raw amino-acid sequence, 292 residues long: Chondroitin proteoglycan 3 (292 aa).

A signal peptide spans 1 to 17; sequence MRFVFIIALLLIGASLA. Residues 28 to 103 form a disordered region; that stretch reads DVSASEDEFS…EGSGDTSPVV (76 aa). Residues 38–80 show a composition bias toward low complexity; it reads GDSSGEISGESSGEASGEASGEASGEASGEASGESSGETSGES. A compositionally biased stretch (acidic residues) spans 81–96; that stretch reads SGDEETSGEGSGEEGS. Asn-174 and Asn-254 each carry an N-linked (GlcNAc...) asparagine glycan.

The sequence is that of Chondroitin proteoglycan 3 from Caenorhabditis elegans.